An 827-amino-acid chain; its full sequence is Zinc phosphodiesterase ELAC protein 2 (827 aa).

The transit peptide at 1–16 directs the protein to the mitochondrion; the sequence is MWALRSLLRPLGLRTM. Disordered regions lie at residues 15–46 and 181–220; these read TMSQ…GWGP and SERR…QCLP. Over residues 181 to 192 the composition is skewed to basic and acidic residues; that stretch reads SERRCGEQEPSR. A phosphoserine mark is found at Ser-193, Ser-197, Ser-202, Ser-207, Ser-617, and Ser-735. The span at 199–210 shows a compositional bias: polar residues; sequence NRLSPKQSSSDP. A disordered region spans residues 794–827; the sequence is LTQQADSSEDREPHQKRAHSEEPHSPQSKKVRAQ. At Thr-795 the chain carries Phosphothreonine. Ser-800 carries the phosphoserine modification. Residues 801-817 are compositionally biased toward basic and acidic residues; sequence SEDREPHQKRAHSEEPH. Phosphoserine is present on Ser-818.

Belongs to the RNase Z family. Homodimer. Interacts with PTCD1. Zn(2+) serves as cofactor.

The protein resides in the mitochondrion. It localises to the mitochondrion matrix. It is found in the mitochondrion nucleoid. The protein localises to the nucleus. It catalyses the reaction Endonucleolytic cleavage of RNA, removing extra 3' nucleotides from tRNA precursor, generating 3' termini of tRNAs. A 3'-hydroxy group is left at the tRNA terminus and a 5'-phosphoryl group is left at the trailer molecule.. In terms of biological role, zinc phosphodiesterase, which displays mitochondrial tRNA 3'-processing endonuclease activity. Involved in tRNA maturation, by removing a 3'-trailer from precursor tRNA. Associates with mitochondrial DNA complexes at the nucleoids to initiate RNA processing and ribosome assembly. The polypeptide is Zinc phosphodiesterase ELAC protein 2 (Elac2) (Rattus norvegicus (Rat)).